The chain runs to 274 residues: Small ribosomal subunit protein uS3 (274 aa).

In terms of domain architecture, KH type-2 spans 38–106; it reads IRRLLSSGLE…QVQLNILEVK (69 aa). The segment at 215-274 is disordered; sequence AAAAPAGADRPRRERPSGTRPRRSGASGTTATGTDAGRAAGGEEAAPDAAAPVEAQSTES. Positions 238 to 266 are enriched in low complexity; sequence SGASGTTATGTDAGRAAGGEEAAPDAAAP.

It belongs to the universal ribosomal protein uS3 family. In terms of assembly, part of the 30S ribosomal subunit. Forms a tight complex with proteins S10 and S14.

In terms of biological role, binds the lower part of the 30S subunit head. Binds mRNA in the 70S ribosome, positioning it for translation. In Mycobacterium tuberculosis (strain ATCC 25177 / H37Ra), this protein is Small ribosomal subunit protein uS3.